Here is a 306-residue protein sequence, read N- to C-terminus: Homoserine kinase (306 aa).

88–98 (PLARGLGSSAT) provides a ligand contact to ATP.

It belongs to the GHMP kinase family. Homoserine kinase subfamily.

Its subcellular location is the cytoplasm. It catalyses the reaction L-homoserine + ATP = O-phospho-L-homoserine + ADP + H(+). Its pathway is amino-acid biosynthesis; L-threonine biosynthesis; L-threonine from L-aspartate: step 4/5. In terms of biological role, catalyzes the ATP-dependent phosphorylation of L-homoserine to L-homoserine phosphate. The polypeptide is Homoserine kinase (Synechococcus sp. (strain ATCC 27144 / PCC 6301 / SAUG 1402/1) (Anacystis nidulans)).